Reading from the N-terminus, the 200-residue chain is Large ribosomal subunit protein uL4 (200 aa).

Residues 43 to 65 form a disordered region; the sequence is RAQKTRSEVSGGGAKPWRQKGTG.

It belongs to the universal ribosomal protein uL4 family. In terms of assembly, part of the 50S ribosomal subunit.

Functionally, one of the primary rRNA binding proteins, this protein initially binds near the 5'-end of the 23S rRNA. It is important during the early stages of 50S assembly. It makes multiple contacts with different domains of the 23S rRNA in the assembled 50S subunit and ribosome. Forms part of the polypeptide exit tunnel. The chain is Large ribosomal subunit protein uL4 from Aliivibrio salmonicida (strain LFI1238) (Vibrio salmonicida (strain LFI1238)).